We begin with the raw amino-acid sequence, 1253 residues long: Cytoplasmic FMR1-interacting protein 1 (1253 aa).

Phosphoserine is present on Ser583. Positions 724-732 (DKRLRSECK) are EIF4E-binding. Thr1234 carries the phosphothreonine modification.

This sequence belongs to the CYFIP family. Component of the WAVE1 complex composed of ABI2, CYFIP1 or CYFIP2, BRK1, NCKAP1 and WASF1/WAVE1. Within the complex, a heterodimer containing NCKAP1 and CYFIP1 interacts with a heterotrimer formed by WAVE1, ABI2 and BRK1. Component of the CYFIP1-EIF4E-FMR1 complex which is composed of CYFIP, EIF4E and FMR1. Interacts with FMR1 but does not bind to related proteins FXR1 or FXR2. Interaction with EIF4E stimulates FMR1 binding. Component of the WAVE2 complex composed of ABI1, CYFIP1/SRA1, NCKAP1/NAP1 (NCKAP1L/HEM1 in hematopoietic cells) and WASF2/WAVE2. Interacts with the active GTP-bound form of RAC1. Interacts through its C-terminus with the C-terminus of DPYSL2/CRMP2 which is necessary for DPYSL2-induced axon outgrowth. Interacts with NYAP1, NYAP2 and MYO16. Interacts with TMEM108 (via N-terminus); the interaction associates TMEM108 with the WAVE1 complex. Highly expressed in embryonic and adult developing nervous system.

It is found in the cytoplasm. The protein resides in the perinuclear region. It localises to the cell projection. Its subcellular location is the lamellipodium. The protein localises to the ruffle. It is found in the synapse. The protein resides in the synaptosome. Component of the CYFIP1-EIF4E-FMR1 complex which binds to the mRNA cap and mediates translational repression. In the CYFIP1-EIF4E-FMR1 complex this subunit is an adapter between EIF4E and FMR1. Promotes the translation repression activity of FMR1 in brain probably by mediating its association with EIF4E and mRNA. Regulates formation of membrane ruffles and lamellipodia. Plays a role in axon outgrowth. Binds to F-actin but not to RNA. Part of the WAVE complex that regulates actin filament reorganization via its interaction with the Arp2/3 complex. Actin remodeling activity is regulated by RAC1. Regulator of epithelial morphogenesis. May act as an invasion suppressor in cancers. As component of the WAVE1 complex, required for BDNF-NTRK2 endocytic trafficking and signaling from early endosomes. In Mus musculus (Mouse), this protein is Cytoplasmic FMR1-interacting protein 1.